The chain runs to 232 residues: 2-C-methyl-D-erythritol 4-phosphate cytidylyltransferase (232 aa).

It belongs to the IspD/TarI cytidylyltransferase family. IspD subfamily.

It carries out the reaction 2-C-methyl-D-erythritol 4-phosphate + CTP + H(+) = 4-CDP-2-C-methyl-D-erythritol + diphosphate. Its pathway is isoprenoid biosynthesis; isopentenyl diphosphate biosynthesis via DXP pathway; isopentenyl diphosphate from 1-deoxy-D-xylulose 5-phosphate: step 2/6. Catalyzes the formation of 4-diphosphocytidyl-2-C-methyl-D-erythritol from CTP and 2-C-methyl-D-erythritol 4-phosphate (MEP). This is 2-C-methyl-D-erythritol 4-phosphate cytidylyltransferase from Nitrosospira multiformis (strain ATCC 25196 / NCIMB 11849 / C 71).